A 121-amino-acid polypeptide reads, in one-letter code: Small ribosomal subunit protein uS13 (121 aa).

The tract at residues 94–121 is disordered; sequence GLPLRGQRTRTNARTRKGPRRAAQSLKK.

It belongs to the universal ribosomal protein uS13 family. As to quaternary structure, part of the 30S ribosomal subunit. Forms a loose heterodimer with protein S19. Forms two bridges to the 50S subunit in the 70S ribosome.

Its function is as follows. Located at the top of the head of the 30S subunit, it contacts several helices of the 16S rRNA. In the 70S ribosome it contacts the 23S rRNA (bridge B1a) and protein L5 of the 50S subunit (bridge B1b), connecting the 2 subunits; these bridges are implicated in subunit movement. Contacts the tRNAs in the A and P-sites. The protein is Small ribosomal subunit protein uS13 of Paraburkholderia phytofirmans (strain DSM 17436 / LMG 22146 / PsJN) (Burkholderia phytofirmans).